Here is a 149-residue protein sequence, read N- to C-terminus: Heat shock protein beta-3 (149 aa).

In terms of domain architecture, sHSP spans 47-149 (KARAAQAPPV…VEVKDSAGTK (103 aa)).

This sequence belongs to the small heat shock protein (HSP20) family.

The protein localises to the cytoplasm. Its subcellular location is the nucleus. Inhibitor of actin polymerization. The protein is Heat shock protein beta-3 (HSPB3) of Bos taurus (Bovine).